We begin with the raw amino-acid sequence, 237 residues long: 4-hydroxy-tetrahydrodipicolinate reductase (237 aa).

Residues 11-16, 92-94, and 116-119 each bind NAD(+); these read GASGRM, GTT, and GSNF. The active-site Proton donor/acceptor is the His-148. His-149 is a (S)-2,3,4,5-tetrahydrodipicolinate binding site. Lys-152 serves as the catalytic Proton donor. (S)-2,3,4,5-tetrahydrodipicolinate is bound at residue 158–159; sequence GS.

This sequence belongs to the DapB family.

It is found in the cytoplasm. The catalysed reaction is (S)-2,3,4,5-tetrahydrodipicolinate + NAD(+) + H2O = (2S,4S)-4-hydroxy-2,3,4,5-tetrahydrodipicolinate + NADH + H(+). It catalyses the reaction (S)-2,3,4,5-tetrahydrodipicolinate + NADP(+) + H2O = (2S,4S)-4-hydroxy-2,3,4,5-tetrahydrodipicolinate + NADPH + H(+). It participates in amino-acid biosynthesis; L-lysine biosynthesis via DAP pathway; (S)-tetrahydrodipicolinate from L-aspartate: step 4/4. Functionally, catalyzes the conversion of 4-hydroxy-tetrahydrodipicolinate (HTPA) to tetrahydrodipicolinate. The protein is 4-hydroxy-tetrahydrodipicolinate reductase of Xylella fastidiosa (strain M12).